A 288-amino-acid chain; its full sequence is General transcription factor IIE subunit 2 (288 aa).

The interval 16–56 (ALTTPAVEKRPSASSESSKKKRAKLELSSTSGSKPSSDGSN) is disordered. A compositionally biased stretch (low complexity) spans 41 to 56 (ELSSTSGSKPSSDGSN). The segment at residues 63–143 (SLSGSSGYKF…YAFKPKYNLK (81 aa)) is a DNA-binding region (TFIIE beta).

Belongs to the TFIIE beta subunit family. As to quaternary structure, tetramer of two alpha and two beta chains.

It localises to the nucleus. In terms of biological role, recruits TFIIH to the initiation complex and stimulates the RNA polymerase II C-terminal domain kinase and DNA-dependent ATPase activities of TFIIH. Both TFIIH and TFIIE are required for promoter clearance by RNA polymerase. In Xenopus laevis (African clawed frog), this protein is General transcription factor IIE subunit 2 (gtf2e2).